Consider the following 125-residue polypeptide: MLVVFFLGILGLLANQILGLPTQAGGHLRSTDNPPQEELGYWCTYMESCKFCWECAHGICKNKVNKSMPLIIENSYLTSCEVSRWYNQCTYSEGNGHYHVMDCSDPVPHNRPHQLLKKIYEKEDL.

The N-terminal stretch at 1 to 29 (MLVVFFLGILGLLANQILGLPTQAGGHLR) is a signal peptide. N-linked (GlcNAc...) asparagine; by host glycosylation occurs at Asn-65. The Prevents secretion from ER motif lies at 122–125 (KEDL).

It belongs to the asfivirus MGF 110 family.

It localises to the virion. Its subcellular location is the host endoplasmic reticulum-Golgi intermediate compartment. Causes the redistribution of lumenal ER protein to an enlarged ERGIC compartment. The protein is Protein MGF 110-4L of Ornithodoros (relapsing fever ticks).